Consider the following 217-residue polypeptide: Small ribosomal subunit protein uS11m (217 aa).

The N-terminal 59 residues, 1-59, are a transit peptide targeting the mitochondrion; sequence MLLQPVWKGCRWTQFVRPIRRWNSTGTNRGVPFSFKDISNQEDITNISYPSSSDSVLTK.

Belongs to the universal ribosomal protein uS11 family. In terms of assembly, component of the mitochondrial small ribosomal subunit (mt-SSU). Mature yeast 74S mitochondrial ribosomes consist of a small (37S) and a large (54S) subunit. The 37S small subunit contains a 15S ribosomal RNA (15S mt-rRNA) and 34 different proteins. The 54S large subunit contains a 21S rRNA (21S mt-rRNA) and 46 different proteins.

Its subcellular location is the mitochondrion. Component of the mitochondrial ribosome (mitoribosome), a dedicated translation machinery responsible for the synthesis of mitochondrial genome-encoded proteins, including at least some of the essential transmembrane subunits of the mitochondrial respiratory chain. The mitoribosomes are attached to the mitochondrial inner membrane and translation products are cotranslationally integrated into the membrane. The protein is Small ribosomal subunit protein uS11m (MRPS18) of Saccharomyces cerevisiae (strain ATCC 204508 / S288c) (Baker's yeast).